Reading from the N-terminus, the 225-residue chain is Small ribosomal subunit protein uS2 (225 aa).

It belongs to the universal ribosomal protein uS2 family.

The sequence is that of Small ribosomal subunit protein uS2 from Metallosphaera sedula (strain ATCC 51363 / DSM 5348 / JCM 9185 / NBRC 15509 / TH2).